Here is a 794-residue protein sequence, read N- to C-terminus: MARNEPSSQQPSSSGSNGTPAQQNGSAKPSKVTVKVVNASFTKAADCYVEITSDTSSAAPKKTTVKKKTMAPEWNEHLNVHANESSTISFRLLQKAKLFDDTCLGMAKLKLSSLTRNENGEFKNDINNISLLAKDSSKIGTLNIIFSGYPERKRRSAGVRAETAASASSEASTSNGVATSSSARRPATAKRDTLAAPTSTAAAAAAATAGGTPAAGAEEQLPDGWEMRFDQYGRKYYVDHTTKSTTWERPSTQPLPQGWEMRRDPRGRVYYVDHNTRTTTWQRPTADMLEAHEQWQSGRDQAMLQWEQRFLLQQNNFSADDPLGPLPEGWEKRQDPNTSRMYFVNHVNRTTQWEDPRTQGFRGSDQPLPDGWEMRFTEQGVPFFIDHQSKTTTYNDPRTGKPVGPLGVVGVQMAMEKSFRWKIAQFRYLCLSNSVPNHVKITVSRNNVFEDSFQEIMRKNAVDLRRRLYIQFRGEEGLDYGGVAREWFFLLSHEVLNPMYCLFMYAGNNNYSLQINPASFVNPDHLKYFEYIGRFIAMALFHGKFIYSGFTMPFYKKMLNKKIVLKDIEQVDSEIYNSLMWIKDNNIDECDMELYFVADYELLGELKTYELKEGGTEIAVTEENKLEYIELLVEWRFNRGVEQQTKAFFTGFNSVFPLEWMQYFDERELELLLCGMQDVDVDDWQRNTVYRHYAPQSKQVTWFWQWVRSLDQEKRARLLQFVTGTCRVPVGGFSELMGSTGPQLFCIERVGKENWLPRSHTCFNRLDLPPYRSYDQLVEKLSMAIEMTEGFGNE.

The span at 1–16 (MARNEPSSQQPSSSGS) shows a compositional bias: low complexity. Disordered stretches follow at residues 1-31 (MARNEPSSQQPSSSGSNGTPAQQNGSAKPSK) and 155-198 (RSAG…AAPT). The 115-residue stretch at 10-124 (QPSSSGSNGT…TRNENGEFKN (115 aa)) folds into the C2 domain. Polar residues predominate over residues 17-27 (NGTPAQQNGSA). Over residues 161-186 (AETAASASSEASTSNGVATSSSARRP) the composition is skewed to low complexity. WW domains are found at residues 219-252 (EQLPDGWEMRFDQYGRKYYVDHTTKSTTWERPST), 253-286 (QPLPQGWEMRRDPRGRVYYVDHNTRTTTWQRPTA), 324-358 (GPLPEGWEKRQDPNTSRMYFVNHVNRTTQWEDPRT), and 366-399 (QPLPDGWEMRFTEQGVPFFIDHQSKTTTYNDPRT). An HECT domain is found at 460 to 794 (NAVDLRRRLY…IEMTEGFGNE (335 aa)). Cys-762 functions as the Glycyl thioester intermediate in the catalytic mechanism.

As to quaternary structure, interacts (via WW domains) with Kruppel-like factor klf-1. Interacts with ubiquitin-conjugating enzyme E2 ubc-18. As to expression, expressed in neurons localized in the head and tail of adults.

The catalysed reaction is S-ubiquitinyl-[E2 ubiquitin-conjugating enzyme]-L-cysteine + [acceptor protein]-L-lysine = [E2 ubiquitin-conjugating enzyme]-L-cysteine + N(6)-ubiquitinyl-[acceptor protein]-L-lysine.. Its pathway is protein modification; protein ubiquitination. Functionally, E3 ubiquitin-protein ligase which accepts ubiquitin from an E2 ubiquitin-conjugating enzyme in the form of a thioester and then directly transfers the ubiquitin to targeted substrates. Ubiquitinates klf-1. Required for diet restriction-mediated lifespan extension, acting in concert with Kruppel-like factor klf-1 in the intestine to perhaps modulate genes involved in lipid metabolism. Probably acting downstream of the Insulin/IGF-1-like signaling (IIS) mediated pathway, plays a role in the immune response to infection by the Gram-negative bacterium P.aeruginosa, at least partly in response to bacterial pore-forming toxins. This Caenorhabditis elegans protein is E3 ubiquitin-protein ligase wwp-1.